The primary structure comprises 81 residues: MKQNLHPKVNTVVFKDISCDFSFLGTSTLHSSETVKWEDGKEYPLIKVEISSASHPFFTGKQRVMDTEGRIDRFKKRYGKK.

It belongs to the bacterial ribosomal protein bL31 family. Type B subfamily. In terms of assembly, part of the 50S ribosomal subunit.

This chain is Large ribosomal subunit protein bL31B, found in Bdellovibrio bacteriovorus (strain ATCC 15356 / DSM 50701 / NCIMB 9529 / HD100).